A 280-amino-acid chain; its full sequence is H-2 class II histocompatibility antigen gamma chain (280 aa).

At 1–30 (MDDQRDLISNHEQLPILGQRARAPESNCNR) the chain is on the cytoplasmic side. S9 is modified (phosphoserine). The helical; Signal-anchor for type II membrane protein transmembrane segment at 31–56 (GVLYTSVSVLVALLLAGQATTAYFLY) threads the bilayer. The Extracellular portion of the chain corresponds to 57–280 (QQQGRLDKLT…TKQDMGQMFL (224 aa)). 2 N-linked (GlcNAc...) asparagine glycosylation sites follow: N114 and N120. The Thyroglobulin type-1 domain maps to 194–255 (LTKCQEEVSH…HTKSRGRHNC (62 aa)). 3 cysteine pairs are disulfide-bonded: C197–C216, C227–C234, and C236–C255. The tract at residues 246 to 268 (HTKSRGRHNCSEPLDMEDPSSGL) is disordered. O-linked (Xyl...) (chondroitin sulfate) serine glycosylation occurs at S266.

In terms of assembly, nonamer composed of three alpha/beta/gamma heterotrimers. Interacts with CD44; this complex is essential for the MIF-induced signaling cascade that results in B cell survival. Interacts with the mature form of CTSL; the complex survive in neutral pH environment.

The protein resides in the late endosome. Its subcellular location is the lysosome. It localises to the cell membrane. The protein localises to the endoplasmic reticulum membrane. It is found in the golgi apparatus. The protein resides in the trans-Golgi network. Its subcellular location is the endosome. It localises to the secreted. Plays a critical role in MHC class II antigen processing by stabilizing peptide-free class II alpha/beta heterodimers in a complex soon after their synthesis and directing transport of the complex from the endoplasmic reticulum to compartments where peptide loading of class II takes place. Enhance also the stimulation of T-cell responses through interaction with CD44. In terms of biological role, binds to the peptide-binding site of MHC class II alpha/beta heterodimers forming an alpha-beta-CLIP complex, thereby preventing the loading of antigenic peptides to the MHC class II complex until its release by HLA-DM in the endosome. Its function is as follows. Stabilizes the conformation of mature CTSL by binding to its active site and serving as a chaperone to help maintain a pool of mature enzyme in endocytic compartments and extracellular space of antigen-presenting cells (APCs). This is H-2 class II histocompatibility antigen gamma chain from Rattus norvegicus (Rat).